The following is a 411-amino-acid chain: Proteasome-activating nucleotidase 2 (411 aa).

The stretch at 35-75 (IVAVNGELQAQLDDVEARREELREEVNRLQRENETLKTASL) forms a coiled coil. ATP is bound by residues 196–201 (GTGKTM) and His-335. Residues 408–411 (SYIQ) are docks into pockets in the proteasome alpha-ring to cause gate opening.

This sequence belongs to the AAA ATPase family. In terms of assembly, homohexamer. The hexameric complex has a two-ring architecture resembling a top hat that caps the 20S proteasome core at one or both ends. Upon ATP-binding, the C-terminus of PAN interacts with the alpha-rings of the proteasome core by binding to the intersubunit pockets.

It is found in the cytoplasm. Its function is as follows. ATPase which is responsible for recognizing, binding, unfolding and translocation of substrate proteins into the archaeal 20S proteasome core particle. Is essential for opening the gate of the 20S proteasome via an interaction with its C-terminus, thereby allowing substrate entry and access to the site of proteolysis. Thus, the C-termini of the proteasomal ATPase function like a 'key in a lock' to induce gate opening and therefore regulate proteolysis. Unfolding activity requires energy from ATP hydrolysis, whereas ATP binding alone promotes ATPase-20S proteasome association which triggers gate opening, and supports translocation of unfolded substrates. This is Proteasome-activating nucleotidase 2 from Halobacterium salinarum (strain ATCC 700922 / JCM 11081 / NRC-1) (Halobacterium halobium).